We begin with the raw amino-acid sequence, 443 residues long: Methyl-coenzyme M reductase II subunit beta (443 aa).

Residue Y367 coordinates coenzyme M. Position 369 (G369) interacts with coenzyme B.

Belongs to the methyl-coenzyme M reductase beta subunit family. As to quaternary structure, MCR is a hexamer of two alpha, two beta, and two gamma chains, forming a dimer of heterotrimers. The cofactor is coenzyme F430.

It carries out the reaction coenzyme B + methyl-coenzyme M = methane + coenzyme M-coenzyme B heterodisulfide. It participates in one-carbon metabolism; methyl-coenzyme M reduction; methane from methyl-coenzyme M: step 1/1. Functionally, component of the methyl-coenzyme M reductase (MCR) I that catalyzes the reductive cleavage of methyl-coenzyme M (CoM-S-CH3 or 2-(methylthio)ethanesulfonate) using coenzyme B (CoB or 7-mercaptoheptanoylthreonine phosphate) as reductant which results in the production of methane and the mixed heterodisulfide of CoB and CoM (CoM-S-S-CoB). This is the final step in methanogenesis. The sequence is that of Methyl-coenzyme M reductase II subunit beta (mrtB) from Methanothermus fervidus (strain ATCC 43054 / DSM 2088 / JCM 10308 / V24 S).